The sequence spans 443 residues: KICSTOR complex protein ITFG2 (443 aa).

The stretch at 19–48 (FPHAICLGDVDNDALNELVVGDTSGKLSVY) is one FG-GAP 1; atypical repeat. S104 is modified (phosphoserine). An FG-GAP 2; atypical repeat occupies 125–154 (NTKVMLISDIDGDGCYELVVGYTDRVVRAF). S219 is subject to Phosphoserine.

As to quaternary structure, part of the KICSTOR complex composed of KPTN, ITFG2, KICS2 and SZT2. SZT2 probably serves as a link between the other three proteins in the KICSTOR complex and may mediate the direct interaction with the GATOR complex via GATOR1. The KICSTOR complex interacts directly with the GATOR1 complex and most probably indirectly with the GATOR2 complex in an amino acid-independent manner.

It is found in the lysosome membrane. Its function is as follows. As part of the KICSTOR complex functions in the amino acid-sensing branch of the TORC1 signaling pathway. Recruits, in an amino acid-independent manner, the GATOR1 complex to the lysosomal membranes and allows its interaction with GATOR2 and the RAG GTPases. Functions upstream of the RAG GTPases and is required to negatively regulate mTORC1 signaling in absence of amino acids. In absence of the KICSTOR complex mTORC1 is constitutively localized to the lysosome and activated. The KICSTOR complex is also probably involved in the regulation of mTORC1 by glucose. The chain is KICSTOR complex protein ITFG2 from Mus musculus (Mouse).